The primary structure comprises 247 residues: UPF0246 protein LCABL_22600 (247 aa).

The protein belongs to the UPF0246 family.

The sequence is that of UPF0246 protein LCABL_22600 from Lacticaseibacillus casei (strain BL23) (Lactobacillus casei).